A 675-amino-acid chain; its full sequence is 1,4-alpha-glucan branching enzyme TK1436 (675 aa).

The active-site Nucleophile is the E183. Residues R261 and G278 each coordinate substrate. D354 acts as the Proton donor in catalysis. The substrate site is built by W407, D467, and Q476. Disordered stretches follow at residues 537-563 and 581-627; these read PELEEYVEPPEVPPEKEETEEKPKVLT and EETR…LSIK. Basic and acidic residues-rich tracts occupy residues 549–563 and 581–595; these read PPEKEETEEKPKVLT and EETREVKKKAVEASK. The span at 596–616 shows a compositional bias: basic residues; sequence RGKRKSSKSKRLPRKVSKKAP.

It belongs to the glycosyl hydrolase 57 family. In terms of assembly, monomer.

The enzyme catalyses Transfers a segment of a (1-&gt;4)-alpha-D-glucan chain to a primary hydroxy group in a similar glucan chain.. In terms of biological role, catalyzes the formation of branch points in alpha-glucans by cleavage of an alpha-1,4 glycosidic bond and subsequent transfer of the cleaved-off oligosaccharide to a new alpha-1,6 position. The branch chain-length distribution of the reaction products shows degree of polymerization (DP) of 5 to 30, with two local maxima at DP 6 and DP 11. Exhibits an alpha-retaining catalytic mechanism. Does not display alpha-galactosidase or pullulanase activity, since melibiose and pullulan are not substrates. Is not able to catalyze the hydrolysis or transglycosylation of maltoheptaose, suggesting that the TK1436 protein contains neither alpha-amylase nor 4-alpha-glucanotransferase activity. This is 1,4-alpha-glucan branching enzyme TK1436 from Thermococcus kodakarensis (strain ATCC BAA-918 / JCM 12380 / KOD1) (Pyrococcus kodakaraensis (strain KOD1)).